Here is an 86-residue protein sequence, read N- to C-terminus: Mu-theraphotoxin-Hhn1b 3 (86 aa).

A signal peptide spans 1–21; that stretch reads MKASMFLALTGLALLFVVCYA. A propeptide spanning residues 22 to 49 is cleaved from the precursor; sequence SESEEKEFSNELLSSVLAVDDNSKGEER. 3 cysteine pairs are disulfide-bonded: cysteine 51/cysteine 66, cysteine 58/cysteine 73, and cysteine 65/cysteine 80. At isoleucine 84 the chain carries Isoleucine amide.

This sequence belongs to the neurotoxin 10 (Hwtx-1) family. 22 (Htx-4) subfamily. Monomer. Expressed by the venom gland.

It is found in the secreted. Its function is as follows. Neurotoxin. Selectively blocks neuronal tetrodotoxin-sensitive voltage-gated sodium channels (Nav) with an IC(50) of 44.6 nM. Does not affect tetrodotoxin-resistant voltage-gated sodium channels or calcium channels. The polypeptide is Mu-theraphotoxin-Hhn1b 3 (Cyriopagopus hainanus (Chinese bird spider)).